The following is a 197-amino-acid chain: Methylamine utilization protein MauD (197 aa).

The chain crosses the membrane as a helical span at residues 3-23 (FLIASNILLWIAFLGVTVVML). Residues 48–180 (PDIGDMAPEF…LESLLEADKT (133 aa)) enclose the Thioredoxin domain.

The protein resides in the membrane. Its pathway is one-carbon metabolism; methylamine degradation. Its function is as follows. May be specifically involved in the processing, transport, and/or maturation of the MADH beta-subunit. This chain is Methylamine utilization protein MauD (mauD), found in Paracoccus versutus (Thiobacillus versutus).